The following is a 79-amino-acid chain: Putative antitoxin VapB1 (79 aa).

Its function is as follows. Antitoxin component of a possible type II toxin-antitoxin (TA) system. The cognate toxin is VapC1. This is Putative antitoxin VapB1 (vapB1) from Mycobacterium tuberculosis (strain ATCC 25618 / H37Rv).